Here is an 892-residue protein sequence, read N- to C-terminus: Alanine--tRNA ligase (892 aa).

Zn(2+) contacts are provided by His-574, His-578, Cys-676, and His-680.

It belongs to the class-II aminoacyl-tRNA synthetase family. The cofactor is Zn(2+).

The protein resides in the cytoplasm. It catalyses the reaction tRNA(Ala) + L-alanine + ATP = L-alanyl-tRNA(Ala) + AMP + diphosphate. Functionally, catalyzes the attachment of alanine to tRNA(Ala) in a two-step reaction: alanine is first activated by ATP to form Ala-AMP and then transferred to the acceptor end of tRNA(Ala). Also edits incorrectly charged Ser-tRNA(Ala) and Gly-tRNA(Ala) via its editing domain. The protein is Alanine--tRNA ligase of Prochlorococcus marinus (strain MIT 9313).